Reading from the N-terminus, the 223-residue chain is Ribose-5-phosphate isomerase A (223 aa).

Substrate-binding positions include 32–35, 83–86, and 96–99; these read TGST, DGAD, and KGGG. Residue glutamate 105 is the Proton acceptor of the active site. Lysine 123 serves as a coordination point for substrate.

It belongs to the ribose 5-phosphate isomerase family. As to quaternary structure, homodimer.

The enzyme catalyses aldehydo-D-ribose 5-phosphate = D-ribulose 5-phosphate. Its pathway is carbohydrate degradation; pentose phosphate pathway; D-ribose 5-phosphate from D-ribulose 5-phosphate (non-oxidative stage): step 1/1. Functionally, catalyzes the reversible conversion of ribose-5-phosphate to ribulose 5-phosphate. This chain is Ribose-5-phosphate isomerase A, found in Acinetobacter baumannii (strain SDF).